Here is a 277-residue protein sequence, read N- to C-terminus: Diaminopimelate epimerase (277 aa).

Residues N11 and N72 each coordinate substrate. The active-site Proton donor is C81. Substrate is bound by residues 82–83, N189, and 207–208; these read GN and ER. C217 acts as the Proton acceptor in catalysis. Position 218-219 (218-219) interacts with substrate; sequence GT.

The protein belongs to the diaminopimelate epimerase family. As to quaternary structure, homodimer.

Its subcellular location is the cytoplasm. The enzyme catalyses (2S,6S)-2,6-diaminopimelate = meso-2,6-diaminopimelate. The protein operates within amino-acid biosynthesis; L-lysine biosynthesis via DAP pathway; DL-2,6-diaminopimelate from LL-2,6-diaminopimelate: step 1/1. In terms of biological role, catalyzes the stereoinversion of LL-2,6-diaminopimelate (L,L-DAP) to meso-diaminopimelate (meso-DAP), a precursor of L-lysine and an essential component of the bacterial peptidoglycan. This chain is Diaminopimelate epimerase, found in Hydrogenobaculum sp. (strain Y04AAS1).